The primary structure comprises 412 residues: Sexual development regulator umv3 (412 aa).

A disordered region spans residues 1-197 (MSAQDDIDTG…PPLLSDLPRH (197 aa)). Composition is skewed to polar residues over residues 73–93 (RANT…SASS) and 149–170 (RQSA…PGST). Over residues 171-181 (ENERVRMHDQR) the composition is skewed to basic and acidic residues. Residues 195-388 (PRHSTDNKTY…ARQGIQVPVR (194 aa)) enclose the Velvet domain.

This sequence belongs to the velvet family. VelC subfamily.

It localises to the nucleus. In terms of biological role, velvet-domain-containing protein not required for disease or sexual development on seedlings. This is Sexual development regulator umv3 from Mycosarcoma maydis (Corn smut fungus).